A 236-amino-acid polypeptide reads, in one-letter code: 2,3,4,5-tetrahydropyridine-2,6-dicarboxylate N-acetyltransferase (236 aa).

The protein belongs to the transferase hexapeptide repeat family. DapH subfamily.

The enzyme catalyses (S)-2,3,4,5-tetrahydrodipicolinate + acetyl-CoA + H2O = L-2-acetamido-6-oxoheptanedioate + CoA. Its pathway is amino-acid biosynthesis; L-lysine biosynthesis via DAP pathway; LL-2,6-diaminopimelate from (S)-tetrahydrodipicolinate (acetylase route): step 1/3. In terms of biological role, catalyzes the transfer of an acetyl group from acetyl-CoA to tetrahydrodipicolinate. This chain is 2,3,4,5-tetrahydropyridine-2,6-dicarboxylate N-acetyltransferase, found in Bacillus subtilis (strain 168).